Reading from the N-terminus, the 717-residue chain is Eukaryotic translation initiation factor 3 subunit B (717 aa).

The segment at 1 to 89 (MTVEDNLDID…VFIEYETGEM (89 aa)) is sufficient for interaction with HCR1 and TIF32. Residues 1–216 (MTVEDNLDID…GVQLWGGPDW (216 aa)) are sufficient for interaction with PIC8. The RRM domain maps to 28–115 (SFIVVDGAPV…HKLLVNKLSE (88 aa)). WD repeat units lie at residues 183–221 (RERW…PPIC), 223–284 (FQHP…PVRT), 293–332 (GASM…LLDK), 445–484 (ELKD…NRHT), 506–549 (FDKK…DRKH), and 564–609 (SEHY…QREE).

This sequence belongs to the eIF-3 subunit B family. Component of the eukaryotic translation initiation factor 3 (eIF-3) complex.

The protein resides in the cytoplasm. Its function is as follows. RNA-binding component of the eukaryotic translation initiation factor 3 (eIF-3) complex, which is involved in protein synthesis of a specialized repertoire of mRNAs and, together with other initiation factors, stimulates binding of mRNA and methionyl-tRNAi to the 40S ribosome. The eIF-3 complex specifically targets and initiates translation of a subset of mRNAs involved in cell proliferation. This chain is Eukaryotic translation initiation factor 3 subunit B, found in Yarrowia lipolytica (strain CLIB 122 / E 150) (Yeast).